The chain runs to 490 residues: Cysteine--tRNA ligase (490 aa).

A Zn(2+)-binding site is contributed by Cys43. The short motif at 45–55 (MTVQSSPHLGH) is the 'HIGH' region element. The tract at residues 177-204 (VDEMSPAEDSDPRGKRDPRDFALWKGHK) is disordered. The span at 186 to 204 (SDPRGKRDPRDFALWKGHK) shows a compositional bias: basic and acidic residues. Residues Cys228, His253, and Glu257 each coordinate Zn(2+). The 'KMSKS' region signature appears at 284–288 (KMSKS). Lys287 serves as a coordination point for ATP.

The protein belongs to the class-I aminoacyl-tRNA synthetase family. In terms of assembly, monomer. Zn(2+) is required as a cofactor.

It localises to the cytoplasm. The catalysed reaction is tRNA(Cys) + L-cysteine + ATP = L-cysteinyl-tRNA(Cys) + AMP + diphosphate. This chain is Cysteine--tRNA ligase, found in Cutibacterium acnes (strain DSM 16379 / KPA171202) (Propionibacterium acnes).